We begin with the raw amino-acid sequence, 67 residues long: Large ribosomal subunit protein bL31 (67 aa).

Zn(2+) is bound by residues Cys16, Cys18, Cys36, and Cys39.

Belongs to the bacterial ribosomal protein bL31 family. Type A subfamily. Part of the 50S ribosomal subunit. Zn(2+) is required as a cofactor.

Functionally, binds the 23S rRNA. This is Large ribosomal subunit protein bL31 from Desulforudis audaxviator (strain MP104C).